Here is a 560-residue protein sequence, read N- to C-terminus: DNA ligase B (560 aa).

Lys124 functions as the N6-AMP-lysine intermediate in the catalytic mechanism.

Belongs to the NAD-dependent DNA ligase family. LigB subfamily.

The enzyme catalyses NAD(+) + (deoxyribonucleotide)n-3'-hydroxyl + 5'-phospho-(deoxyribonucleotide)m = (deoxyribonucleotide)n+m + AMP + beta-nicotinamide D-nucleotide.. Its function is as follows. Catalyzes the formation of phosphodiester linkages between 5'-phosphoryl and 3'-hydroxyl groups in double-stranded DNA using NAD as a coenzyme and as the energy source for the reaction. This Escherichia coli (strain K12 / DH10B) protein is DNA ligase B.